The sequence spans 1271 residues: ATP-dependent helicase/nuclease subunit A (1271 aa).

Positions 3–476 (TKWTEEQELA…IMLYKNFRSR (474 aa)) constitute a UvrD-like helicase ATP-binding domain. 24-31 (AAAGSGKT) lines the ATP pocket. One can recognise a UvrD-like helicase C-terminal domain in the interval 528–824 (IENLKVAGDI…RIMSIHKSKG (297 aa)).

Belongs to the helicase family. AddA subfamily. Heterodimer of AddA and AddB/RexB. Mg(2+) serves as cofactor.

The enzyme catalyses Couples ATP hydrolysis with the unwinding of duplex DNA by translocating in the 3'-5' direction.. It carries out the reaction ATP + H2O = ADP + phosphate + H(+). The heterodimer acts as both an ATP-dependent DNA helicase and an ATP-dependent, dual-direction single-stranded exonuclease. Recognizes the chi site generating a DNA molecule suitable for the initiation of homologous recombination. The AddA nuclease domain is required for chi fragment generation; this subunit has the helicase and 3' -&gt; 5' nuclease activities. The polypeptide is ATP-dependent helicase/nuclease subunit A (Clostridium perfringens (strain ATCC 13124 / DSM 756 / JCM 1290 / NCIMB 6125 / NCTC 8237 / Type A)).